Consider the following 404-residue polypeptide: S-adenosylmethionine synthase (404 aa).

Over residues 1 to 13 (MSHSRYFFTSESV) the composition is skewed to polar residues. Residues 1–20 (MSHSRYFFTSESVSEGHPDK) form a disordered region. His17 provides a ligand contact to ATP. Position 19 (Asp19) interacts with Mg(2+). K(+) is bound at residue Glu45. L-methionine-binding residues include Glu58 and Gln101. A flexible loop region spans residues 101–111 (QSPDINRGVDR). ATP contacts are provided by residues 172 to 174 (DSK), 246 to 247 (RF), Asp255, 261 to 262 (RK), Ala278, and Lys282. L-methionine is bound at residue Asp255. Lys286 provides a ligand contact to L-methionine.

This sequence belongs to the AdoMet synthase family. Homotetramer; dimer of dimers. It depends on Mg(2+) as a cofactor. The cofactor is K(+).

The protein localises to the cytoplasm. It carries out the reaction L-methionine + ATP + H2O = S-adenosyl-L-methionine + phosphate + diphosphate. It functions in the pathway amino-acid biosynthesis; S-adenosyl-L-methionine biosynthesis; S-adenosyl-L-methionine from L-methionine: step 1/1. Catalyzes the formation of S-adenosylmethionine (AdoMet) from methionine and ATP. The overall synthetic reaction is composed of two sequential steps, AdoMet formation and the subsequent tripolyphosphate hydrolysis which occurs prior to release of AdoMet from the enzyme. This chain is S-adenosylmethionine synthase, found in Chlorobaculum parvum (strain DSM 263 / NCIMB 8327) (Chlorobium vibrioforme subsp. thiosulfatophilum).